The primary structure comprises 171 residues: Shikimate kinase (171 aa).

Position 14-19 (14-19 (GAGKST)) interacts with ATP. S18 is a binding site for Mg(2+). Residues D36, R60, and G82 each contribute to the substrate site. R120 is an ATP binding site. R139 provides a ligand contact to substrate. Q156 lines the ATP pocket.

This sequence belongs to the shikimate kinase family. Monomer. Mg(2+) is required as a cofactor.

The protein localises to the cytoplasm. The enzyme catalyses shikimate + ATP = 3-phosphoshikimate + ADP + H(+). It functions in the pathway metabolic intermediate biosynthesis; chorismate biosynthesis; chorismate from D-erythrose 4-phosphate and phosphoenolpyruvate: step 5/7. Functionally, catalyzes the specific phosphorylation of the 3-hydroxyl group of shikimic acid using ATP as a cosubstrate. The chain is Shikimate kinase from Shewanella sp. (strain ANA-3).